We begin with the raw amino-acid sequence, 472 residues long: E3 ubiquitin-protein ligase MYLIP-A (472 aa).

An FERM domain is found at 1-279 (MLCHVTRPDA…ETHAFYRCDT (279 aa)). The RING-type zinc finger occupies 384-419 (CMLCCEEEIDAAFCPCGHMVCCQNCAAQLQSCPVCR).

Interacts with anxa5. As to expression, ubiquitous.

The protein localises to the cytoplasm. The protein resides in the cytosol. It carries out the reaction S-ubiquitinyl-[E2 ubiquitin-conjugating enzyme]-L-cysteine + [acceptor protein]-L-lysine = [E2 ubiquitin-conjugating enzyme]-L-cysteine + N(6)-ubiquitinyl-[acceptor protein]-L-lysine.. The protein operates within protein modification; protein ubiquitination. E3 ubiquitin-protein ligase that mediates ubiquitination and subsequent proteasomal degradation of myosin regulatory light chain (MRLC). Regulates cell movements during gastrulation by acting downstream of fz7 to antagonize the frizzled-signaling pathway. This Danio rerio (Zebrafish) protein is E3 ubiquitin-protein ligase MYLIP-A (mylipa).